A 191-amino-acid polypeptide reads, in one-letter code: uncharacterized protein (191 aa).

Positions 52–112 (NKQENQTESS…TNKDTNIETN (61 aa)) are disordered. Positions 57-70 (QTESSDLNNTDSLV) are enriched in polar residues. Low complexity predominate over residues 71-94 (DSNSDNQTNTTDTSTNNVENLNEN). The stretch at 138-172 (QDKISDTERIRFLEEKVSKLERKIRTLSLQMTKIS) forms a coiled coil.

This is an uncharacterized protein from Acanthamoeba polyphaga mimivirus (APMV).